The following is a 344-amino-acid chain: MAGGRPAGSAIEMEGAMRTLPSSGRPSGTGWQSRGPLFGRNYGLSPGSRLLPPRCQENADPQKMAFLLRKQWTLYSVSPLYKFSSADLKDYARMLGVFIAAEKQKGLAVDVDGELGIKVAMSGLPELRGSEQDPAAVLVQLSLRSSVSPKNSEEKLIWSGWFCCVAGDDLLENLPENFTCLPLFLVNGAESYTAIVGSWFQKTFDCCFRRLAISPLNLTWMAAMWTGCKVDKNTAATELLFSVPHLPQPLDISYAIHPEDAKALWDTVQKTPGEITQEEVDVFMECLYSHFHRHFKIHLSATKLVKVSTGIASAHCDGIIKFLQSQYLIGVLMLLTELAISQIQ.

Positions 1-32 (MAGGRPAGSAIEMEGAMRTLPSSGRPSGTGWQ) are disordered. Residues 20 to 32 (LPSSGRPSGTGWQ) show a composition bias toward polar residues.

Belongs to the CENP-L/IML3 family. Component of the CENPA-HI complex, at least composed of CENPH, CENPI, CENPK, CENPL, CENPM, CENPO and CENPP.

Its subcellular location is the nucleus. The protein resides in the chromosome. It localises to the centromere. Component of the CENPA-HI complex, a centromeric complex involved in assembly of kinetochore proteins, mitotic progression and chromosome segregation. The chain is Centromere protein L (CENPL) from Gallus gallus (Chicken).